We begin with the raw amino-acid sequence, 78 residues long: RNA-binding protein KhpA (78 aa).

In terms of domain architecture, KH spans 29–78 (TIIYELSVAKPDIGKIIGKEGRTIKAIRTLLVSVASRNNVRVSLEIMEEK).

It belongs to the KhpA RNA-binding protein family.

It localises to the cytoplasm. Functionally, a probable RNA-binding protein. In Chlamydia pneumoniae (Chlamydophila pneumoniae), this protein is RNA-binding protein KhpA.